The following is a 306-amino-acid chain: GTP-binding protein RAD (306 aa).

Over residues 1-13 the composition is skewed to gly residues; it reads MTLNGGSGAGGSR. Residues 1–91 form a disordered region; it reads MTLNGGSGAG…GDSGSEDGVY (91 aa). At Arg-23 the chain carries Omega-N-methylarginine. Ser-25 bears the Phosphoserine mark. A compositionally biased stretch (low complexity) spans 56 to 88; the sequence is AATAAGTRTQGQRLDWPEGSSDSLSSGDSGSED. Residues 97–104 and 201–204 each bind GTP; these read GAPGVGKS and NKSD. The interval 276–295 is calmodulin-binding; it reads AKLFLGRIVARNSRKMAFLA.

This sequence belongs to the small GTPase superfamily. RGK family. Interacts with Calmodulin preferentially in the inactive, GDP-bound form. Interacts with CAMK2D. Interacts with CACNB2; interaction may be involved in beta-adrenergic regulation of heart rate and contractile force. Interaction with CACNB2 regulates the trafficking of CACNA1C to the cell membrane.

It is found in the cell membrane. Its function is as follows. May regulate basal voltage-dependent L-type Ca(2+) currents and be required for beta-adrenergic augmentation of Ca(2+) influx in cardiomyocytes, thereby regulating increases in heart rate and contractile force. May play an important role in cardiac antiarrhythmia via the strong suppression of voltage-dependent L-type Ca(2+) currents. Regulates voltage-gated L-type calcium channel subunit alpha-1C trafficking to the cell membrane. Inhibits cardiac hypertrophy through the calmodulin-dependent kinase II (CaMKII) pathway. Inhibits phosphorylation and activation of CAMK2D. In Rattus norvegicus (Rat), this protein is GTP-binding protein RAD (Rrad).